Reading from the N-terminus, the 36-residue chain is Tddefensin (36 aa).

Disulfide bonds link Cys3–Cys24, Cys10–Cys32, and Cys14–Cys34.

The protein belongs to the invertebrate defensin family. Expressed by the venom gland.

Its subcellular location is the secreted. Its function is as follows. Antibacterial peptide mostly active against Gram-positive bacteria. In Tityus discrepans (Venezuelan scorpion), this protein is Tddefensin.